The chain runs to 514 residues: MTTRKRPLALLILDGWGYRENTQKNAVYHANTPVLDRLNAQYPNSLISGSGLDVGLPDGQMGNSEVGHINIGSGRIVYQELTRIGKAIEDGEFDKNQALVESIDKAIANQGAVHIMGLLSPGGVHSHESHIEAMCRLAVARGAKQVYLHAFLDGRDTPPRSAKGSLAHFDDLFTTLGTGRVASVIGRYYAMDRDNRWDRVSQAYELITEGKSLHQYSNAVEALEAAYARDENDEFVGSSAILDAQGDSAQLADGDALIFMNFRADRARQITRSFVDADFDGFERNVTPKAHFVMLTEYAADIKAAIAYPSTNLVNTLGEALQDSDKTQLRISETEKYAHVTFFFNGGKEEPFKGEDRILIQSPKVATYDLQPEMSSAELTDKLVEAIESTKYDVIICNYPNGDMVGHTGSFDAAVKACEAVDTCIGRVVDALAKVDGECLITADHGNAEQMTDEQTGQAHTAHTSELVPLIYVGRNGSIENDGRLSDLAPTMLTLMGEEVPSEMTGRSIIKLDE.

The Mn(2+) site is built by D14 and S64. The Phosphoserine intermediate role is filled by S64. Substrate contacts are provided by residues H125, 155–156 (RD), R187, R193, 263–266 (RADR), and K336. Mn(2+) contacts are provided by D403, H407, D444, H445, and H463.

The protein belongs to the BPG-independent phosphoglycerate mutase family. Monomer. It depends on Mn(2+) as a cofactor.

The enzyme catalyses (2R)-2-phosphoglycerate = (2R)-3-phosphoglycerate. It participates in carbohydrate degradation; glycolysis; pyruvate from D-glyceraldehyde 3-phosphate: step 3/5. In terms of biological role, catalyzes the interconversion of 2-phosphoglycerate and 3-phosphoglycerate. This Shewanella sediminis (strain HAW-EB3) protein is 2,3-bisphosphoglycerate-independent phosphoglycerate mutase.